We begin with the raw amino-acid sequence, 283 residues long: Elongation factor Ts (283 aa).

Residues 80–83 (TDFV) form an involved in Mg(2+) ion dislocation from EF-Tu region.

It belongs to the EF-Ts family.

The protein localises to the cytoplasm. Its function is as follows. Associates with the EF-Tu.GDP complex and induces the exchange of GDP to GTP. It remains bound to the aminoacyl-tRNA.EF-Tu.GTP complex up to the GTP hydrolysis stage on the ribosome. The sequence is that of Elongation factor Ts from Haemophilus influenzae (strain PittGG).